The following is a 496-amino-acid chain: UDP-N-acetylmuramoyl-L-alanyl-D-glutamate--2,6-diaminopimelate ligase (496 aa).

Residue S32 participates in UDP-N-acetyl-alpha-D-muramoyl-L-alanyl-D-glutamate binding. 116 to 122 (GTNGKTT) is a binding site for ATP. UDP-N-acetyl-alpha-D-muramoyl-L-alanyl-D-glutamate is bound by residues 158-159 (TT), S185, Q191, and R193. K225 is subject to N6-carboxylysine. Residues R389, 413-416 (DNPR), G464, and E468 each bind meso-2,6-diaminopimelate. A Meso-diaminopimelate recognition motif motif is present at residues 413–416 (DNPR).

This sequence belongs to the MurCDEF family. MurE subfamily. The cofactor is Mg(2+). In terms of processing, carboxylation is probably crucial for Mg(2+) binding and, consequently, for the gamma-phosphate positioning of ATP.

The protein resides in the cytoplasm. It catalyses the reaction UDP-N-acetyl-alpha-D-muramoyl-L-alanyl-D-glutamate + meso-2,6-diaminopimelate + ATP = UDP-N-acetyl-alpha-D-muramoyl-L-alanyl-gamma-D-glutamyl-meso-2,6-diaminopimelate + ADP + phosphate + H(+). The protein operates within cell wall biogenesis; peptidoglycan biosynthesis. Functionally, catalyzes the addition of meso-diaminopimelic acid to the nucleotide precursor UDP-N-acetylmuramoyl-L-alanyl-D-glutamate (UMAG) in the biosynthesis of bacterial cell-wall peptidoglycan. The chain is UDP-N-acetylmuramoyl-L-alanyl-D-glutamate--2,6-diaminopimelate ligase from Trichormus variabilis (strain ATCC 29413 / PCC 7937) (Anabaena variabilis).